The following is a 419-amino-acid chain: Pregnancy-specific beta-1-glycoprotein 4 (419 aa).

A signal peptide spans 1–34 (MGPLSAPPCTQRITWKGVLLTASLLNFWNPPTTA). Positions 35–144 (QVTIEAQPPK…TGHFTFTLHL (110 aa)) constitute an Ig-like V-type domain. 6 N-linked (GlcNAc...) asparagine glycosylation sites follow: N104, N111, N199, N268, N299, and N303. Ig-like C2-type domains follow at residues 147–234 (PKPS…VTLN), 237–327 (PKLS…VTLN), and 332–410 (PDLP…KSIT). 3 disulfides stabilise this stretch: C169–C217, C262–C310, and C354–C394.

It belongs to the immunoglobulin superfamily. CEA family.

The protein localises to the secreted. This is Pregnancy-specific beta-1-glycoprotein 4 (PSG4) from Homo sapiens (Human).